Reading from the N-terminus, the 128-residue chain is Fluoride-specific ion channel FluC 2 (128 aa).

4 helical membrane passes run 13 to 35, 40 to 59, 71 to 93, and 97 to 119; these read ALVA…AIAG, LAAN…EAAA, LLGT…TAGL, and WMAA…GRAI.

This sequence belongs to the fluoride channel Fluc/FEX (TC 1.A.43) family.

Its subcellular location is the cell membrane. It carries out the reaction fluoride(in) = fluoride(out). In terms of biological role, fluoride-specific ion channel. Important for reducing fluoride concentration in the cell, thus reducing its toxicity. This chain is Fluoride-specific ion channel FluC 2, found in Halobacterium salinarum (strain ATCC 700922 / JCM 11081 / NRC-1) (Halobacterium halobium).